The primary structure comprises 374 residues: MKRQRVVVKIGSSSLTDPKGGLCHDKLLDHVQAIAYMKQLGHDIILITSGAVAAGFGPLGYPTRPTTIAGKQAAAAVGQSLLMQAYSAQFAQFGFTAAQLLLTRSDFYSRERFRNLFATITTLLEHGAVPIINENDSVSVEELTFGDNDMLSALVAGFLHADALVLLTDINGLYDANPKTNPQAKKYAFLPEITSEMLASAGGSGSTVGTGGMRSKLLAAQKALSFGVSVFIGTGSGKEKLADILAGKGDGTYIGVPFPKQMQMRKQWIAYHAPVSGTITVDSGAEEALLDRGKSLLPAGVTAVSGDFHAMDVVNVINEKGVTIGRGQVYYAAADLKKVKGRPSEEARQYSYLHRPEVIHRDNWVTLRKERVKR.

Lys-9 contacts ATP. Substrate is bound by residues Ser-49, Asp-136, and Asn-148. ATP contacts are provided by residues 168 to 169 and 210 to 216; these read TD and TGGMRSK. Positions 276–354 constitute a PUA domain; it reads SGTITVDSGA…EEARQYSYLH (79 aa).

This sequence belongs to the glutamate 5-kinase family.

Its subcellular location is the cytoplasm. The enzyme catalyses L-glutamate + ATP = L-glutamyl 5-phosphate + ADP. It participates in amino-acid biosynthesis; L-proline biosynthesis; L-glutamate 5-semialdehyde from L-glutamate: step 1/2. Its function is as follows. Catalyzes the transfer of a phosphate group to glutamate to form L-glutamate 5-phosphate. The sequence is that of Glutamate 5-kinase from Geobacillus thermodenitrificans (strain NG80-2).